The primary structure comprises 103 residues: Acyl carrier protein (103 aa).

In terms of domain architecture, Carrier spans 14–89 (NIVSNIVQDI…EFIDFTLQTI (76 aa)). Residue S49 is modified to O-(pantetheine 4'-phosphoryl)serine.

The protein belongs to the acyl carrier protein (ACP) family. In terms of processing, 4'-phosphopantetheine is transferred from CoA to a specific serine of apo-ACP by AcpS. This modification is essential for activity because fatty acids are bound in thioester linkage to the sulfhydryl of the prosthetic group.

The protein resides in the plastid. Its subcellular location is the cyanelle. It participates in lipid metabolism; fatty acid biosynthesis. Carrier of the growing fatty acid chain in fatty acid biosynthesis. The chain is Acyl carrier protein from Cyanophora paradoxa.